A 182-amino-acid chain; its full sequence is ATP-dependent protease subunit HslV (182 aa).

The active site involves T10. Positions 166, 169, and 172 each coordinate Na(+).

The protein belongs to the peptidase T1B family. HslV subfamily. A double ring-shaped homohexamer of HslV is capped on each side by a ring-shaped HslU homohexamer. The assembly of the HslU/HslV complex is dependent on binding of ATP.

It localises to the cytoplasm. It carries out the reaction ATP-dependent cleavage of peptide bonds with broad specificity.. Its activity is regulated as follows. Allosterically activated by HslU binding. In terms of biological role, protease subunit of a proteasome-like degradation complex believed to be a general protein degrading machinery. The polypeptide is ATP-dependent protease subunit HslV (Rickettsia prowazekii (strain Madrid E)).